We begin with the raw amino-acid sequence, 1627 residues long: Adhesin P1 (1627 aa).

The N-terminal stretch at 1-59 is a signal peptide; it reads MHQTKKTALSKSTWILILTATASLATGLTVVGHFTSTTTTLKRQQFSYTRPDEVALRHT. Disordered regions lie at residues 219-238, 252-355, 898-953, and 1274-1362; these read LPQQ…AMFG, NEKL…PWRP, WRND…TTQD, and SFGT…TGND. Polar residues predominate over residues 224–234; it reads TESGQNTSTTG. The span at 261-276 shows a compositional bias: low complexity; the sequence is TGSSTTSGSGQSTQRG. Residues 282–297 are compositionally biased toward basic and acidic residues; it reads TKVKALKIEVKKKSDS. 3 stretches are compositionally biased toward polar residues: residues 903–933, 939–953, and 1274–1297; these read ASSG…SAGN, QDNI…TTQD, and SFGT…VFGT. Positions 1307–1320 are enriched in gly residues; sequence SGGGAGGGSSGSGQ. Over residues 1341 to 1352 the composition is skewed to low complexity; that stretch reads STSDGNTSSTNN. The tract at residues 1403 to 1415 is cytadherence epitope; sequence GPQSVKFKSPDQI. Residues 1527-1547 form a helical membrane-spanning segment; it reads AITVPIVVIVLSVTLGLAIGI. The segment at 1589–1627 is disordered; it reads QAPKRLKQTSAAKPGAPRPPVPPKPGAPKPPVQPPKKPA. Pro residues predominate over residues 1604-1627; sequence APRPPVPPKPGAPKPPVQPPKKPA.

Belongs to the adhesin P1 family.

It is found in the cell membrane. The protein resides in the cell projection. It localises to the attachment organelle. The protein localises to the cell surface. In terms of biological role, the protein is the major adhesin mediating the attachment of this mycoplasma to respiratory epithelium. This Mycoplasma pneumoniae (strain ATCC 29342 / M129 / Subtype 1) (Mycoplasmoides pneumoniae) protein is Adhesin P1 (mgpA).